We begin with the raw amino-acid sequence, 507 residues long: Putative F-box/LRR-repeat protein At4g00320 (507 aa).

The 49-residue stretch at 12–60 (RDGISGLPDAMICHILSFLPTKVAASTTVLAKRWKPLLAFMPNLDFDES) folds into the F-box domain. 5 LRR repeats span residues 135 to 163 (RGFGSNSTFYPLPSEIFVSKTLVRLKIQF), 187 to 212 (YVKMDTRMLQKLLSGCHTLEELLLMN), 214 to 240 (IWKESSEPEPCFVSVSVRTLKILKFSR), 317 to 348 (ILYLTEDTLKVLGCCRETMPVFENLIHLTIRT), and 349 to 374 (GVHIGWKSLPHLLKNCPNLQTLVFEG).

The sequence is that of Putative F-box/LRR-repeat protein At4g00320 from Arabidopsis thaliana (Mouse-ear cress).